Here is a 326-residue protein sequence, read N- to C-terminus: Phosphate acyltransferase (326 aa).

Belongs to the PlsX family. As to quaternary structure, homodimer. Probably interacts with PlsY.

The protein localises to the cytoplasm. It carries out the reaction a fatty acyl-[ACP] + phosphate = an acyl phosphate + holo-[ACP]. The protein operates within lipid metabolism; phospholipid metabolism. Its function is as follows. Catalyzes the reversible formation of acyl-phosphate (acyl-PO(4)) from acyl-[acyl-carrier-protein] (acyl-ACP). This enzyme utilizes acyl-ACP as fatty acyl donor, but not acyl-CoA. This Petrotoga mobilis (strain DSM 10674 / SJ95) protein is Phosphate acyltransferase.